A 420-amino-acid chain; its full sequence is Pre-mRNA-splicing factor RBM22 (420 aa).

Alanine 2 is subject to N-acetylalanine. Residues serine 4 and serine 102 each carry the phosphoserine modification. Residues lysine 139 and lysine 149 each participate in a glycyl lysine isopeptide (Lys-Gly) (interchain with G-Cter in SUMO2) cross-link. The segment at 159 to 186 (RNRPHICSFWVKGECKRGEECPYRHEKP) adopts a C3H1-type zinc-finger fold. N6-acetyllysine is present on lysine 212. The region spanning 232–305 (TTLYVGGLGD…RRLNVKWGRS (74 aa)) is the RRM domain. Lysine 290 is covalently cross-linked (Glycyl lysine isopeptide (Lys-Gly) (interchain with G-Cter in SUMO2)). Disordered stretches follow at residues 303-343 (GRSQ…AAEE) and 372-420 (APPP…HSSP). Residues 309-318 (RGKEKEKDGT) are compositionally biased toward basic and acidic residues.

This sequence belongs to the SLT11 family. In terms of assembly, component of the pre-catalytic and catalytic spliceosome complexes. Component of the postcatalytic spliceosome P complex. Interacts with PDCD6; the interaction induces translocation of PDCD6 in the cytoplasm. Interacts with PPIL1.

Its subcellular location is the nucleus. The protein resides in the cytoplasm. Its function is as follows. Required for pre-mRNA splicing as component of the activated spliceosome. Involved in the first step of pre-mRNA splicing. Binds directly to the internal stem-loop (ISL) domain of the U6 snRNA and to the pre-mRNA intron near the 5' splice site during the activation and catalytic phases of the spliceosome cycle. Involved in both translocations of the nuclear SLU7 to the cytoplasm and the cytosolic calcium-binding protein PDCD6 to the nucleus upon cellular stress responses. This chain is Pre-mRNA-splicing factor RBM22 (RBM22), found in Homo sapiens (Human).